A 681-amino-acid chain; its full sequence is Potassium-transporting ATPase ATP-binding subunit (681 aa).

The next 4 membrane-spanning stretches (helical) occupy residues 37-57 (MFVV…PTYF), 64-84 (VGYN…ANFA), 218-238 (IALT…VMTL), and 255-275 (IALL…AIGI). Asp-306 functions as the 4-aspartylphosphate intermediate in the catalytic mechanism. ATP is bound by residues Asp-343, Glu-347, 375 to 382 (FSAETRMS), and Lys-394. Positions 517 and 521 each coordinate Mg(2+). The next 3 helical transmembrane spans lie at 573-595 (ALTT…AIIS), 615-635 (AILS…PIAM), and 655-675 (IYGL…DMII).

Belongs to the cation transport ATPase (P-type) (TC 3.A.3) family. Type IA subfamily. In terms of assembly, the system is composed of three essential subunits: KdpA, KdpB and KdpC.

The protein localises to the cell membrane. It catalyses the reaction K(+)(out) + ATP + H2O = K(+)(in) + ADP + phosphate + H(+). Functionally, part of the high-affinity ATP-driven potassium transport (or Kdp) system, which catalyzes the hydrolysis of ATP coupled with the electrogenic transport of potassium into the cytoplasm. This subunit is responsible for energy coupling to the transport system and for the release of the potassium ions to the cytoplasm. The polypeptide is Potassium-transporting ATPase ATP-binding subunit (Caldanaerobacter subterraneus subsp. tengcongensis (strain DSM 15242 / JCM 11007 / NBRC 100824 / MB4) (Thermoanaerobacter tengcongensis)).